We begin with the raw amino-acid sequence, 201 residues long: Small ribosomal subunit protein uS4 (201 aa).

The interval 1–45 (MARYTGPLTKKSRRLGTDLVGNDKSFERRPYPPGVHGRGRTKDSE) is disordered. The 67-residue stretch at 91–157 (SRLDNVVYRA…PPIVIARETF (67 aa)) folds into the S4 RNA-binding domain.

This sequence belongs to the universal ribosomal protein uS4 family. Part of the 30S ribosomal subunit. Contacts protein S5. The interaction surface between S4 and S5 is involved in control of translational fidelity.

One of the primary rRNA binding proteins, it binds directly to 16S rRNA where it nucleates assembly of the body of the 30S subunit. Its function is as follows. With S5 and S12 plays an important role in translational accuracy. This chain is Small ribosomal subunit protein uS4, found in Cutibacterium acnes (strain DSM 16379 / KPA171202) (Propionibacterium acnes).